Reading from the N-terminus, the 476-residue chain is Glutamate--tRNA ligase (476 aa).

The short motif at 8 to 18 (PSPTGTLHIGT) is the 'HIGH' region element. A 'KMSKS' region motif is present at residues 247–251 (KLSKR). Lys-250 is an ATP binding site.

Belongs to the class-I aminoacyl-tRNA synthetase family. Glutamate--tRNA ligase type 1 subfamily. As to quaternary structure, monomer.

Its subcellular location is the cytoplasm. The catalysed reaction is tRNA(Glu) + L-glutamate + ATP = L-glutamyl-tRNA(Glu) + AMP + diphosphate. In terms of biological role, catalyzes the attachment of glutamate to tRNA(Glu) in a two-step reaction: glutamate is first activated by ATP to form Glu-AMP and then transferred to the acceptor end of tRNA(Glu). This chain is Glutamate--tRNA ligase, found in Synechococcus sp. (strain WH7803).